Here is a 692-residue protein sequence, read N- to C-terminus: Elongation factor G (692 aa).

A tr-type G domain is found at Glu8–Leu282. GTP contacts are provided by residues Ala17 to Thr24, Asp81 to His85, and Asn135 to Asp138.

Belongs to the TRAFAC class translation factor GTPase superfamily. Classic translation factor GTPase family. EF-G/EF-2 subfamily.

It localises to the cytoplasm. Functionally, catalyzes the GTP-dependent ribosomal translocation step during translation elongation. During this step, the ribosome changes from the pre-translocational (PRE) to the post-translocational (POST) state as the newly formed A-site-bound peptidyl-tRNA and P-site-bound deacylated tRNA move to the P and E sites, respectively. Catalyzes the coordinated movement of the two tRNA molecules, the mRNA and conformational changes in the ribosome. The sequence is that of Elongation factor G (fusA) from Halalkalibacterium halodurans (strain ATCC BAA-125 / DSM 18197 / FERM 7344 / JCM 9153 / C-125) (Bacillus halodurans).